A 173-amino-acid polypeptide reads, in one-letter code: MAYIMLTLLIGMVLGVISVASNPSPYFAALGLVLVAGVGCVVLMGHGGSFLSLVLFLIYLGGMLVVFAYCAALAAEPYPEAWGEWSVLGSVLGYLLLVVGAGSWFWGGWYEGMWVPVDELIEFSVVAADSGGVALMYSLGGGLLVVSAWVLLLTLLVVLELTRGLARGALRAV.

Helical transmembrane passes span 1–21 (MAYIMLTLLIGMVLGVISVAS), 25–45 (PYFAALGLVLVAGVGCVVLMG), 53–73 (LVLFLIYLGGMLVVFAYCAAL), 87–107 (VLGSVLGYLLLVVGAGSWFWG), and 139–159 (LGGGLLVVSAWVLLLTLLVVL).

Belongs to the complex I subunit 6 family.

The protein localises to the mitochondrion membrane. It carries out the reaction a ubiquinone + NADH + 5 H(+)(in) = a ubiquinol + NAD(+) + 4 H(+)(out). Core subunit of the mitochondrial membrane respiratory chain NADH dehydrogenase (Complex I) that is believed to belong to the minimal assembly required for catalysis. Complex I functions in the transfer of electrons from NADH to the respiratory chain. The immediate electron acceptor for the enzyme is believed to be ubiquinone. The polypeptide is NADH-ubiquinone oxidoreductase chain 6 (MT-ND6) (Gadus morhua (Atlantic cod)).